Here is a 160-residue protein sequence, read N- to C-terminus: Oligoribonuclease (160 aa).

Positions Leu-8 to Ile-158 constitute an Exonuclease domain. Residue Tyr-129 is part of the active site.

Belongs to the oligoribonuclease family.

It is found in the cytoplasm. In terms of biological role, 3'-to-5' exoribonuclease specific for small oligoribonucleotides. This chain is Oligoribonuclease (orn), found in Buchnera aphidicola subsp. Baizongia pistaciae (strain Bp).